The sequence spans 342 residues: Phosphoribosylformylglycinamidine cyclo-ligase (342 aa).

Belongs to the AIR synthase family.

It localises to the cytoplasm. It catalyses the reaction 2-formamido-N(1)-(5-O-phospho-beta-D-ribosyl)acetamidine + ATP = 5-amino-1-(5-phospho-beta-D-ribosyl)imidazole + ADP + phosphate + H(+). Its pathway is purine metabolism; IMP biosynthesis via de novo pathway; 5-amino-1-(5-phospho-D-ribosyl)imidazole from N(2)-formyl-N(1)-(5-phospho-D-ribosyl)glycinamide: step 2/2. In Gloeothece citriformis (strain PCC 7424) (Cyanothece sp. (strain PCC 7424)), this protein is Phosphoribosylformylglycinamidine cyclo-ligase.